We begin with the raw amino-acid sequence, 307 residues long: Glutaminase (307 aa).

Residues serine 66, asparagine 117, glutamate 161, asparagine 168, tyrosine 192, tyrosine 243, and valine 261 each contribute to the substrate site.

Belongs to the glutaminase family. In terms of assembly, homotetramer.

The catalysed reaction is L-glutamine + H2O = L-glutamate + NH4(+). The polypeptide is Glutaminase (Serratia proteamaculans (strain 568)).